The chain runs to 255 residues: Probable esterase ATEG_07663 (255 aa).

Active-site charge relay system residues include S122, D200, and H227.

The protein belongs to the LovG family.

Functionally, probable esterase; part of the cluster B that mediates the biosynthesis of azasperpyranones, members of the azaphilone family that exhibit anti-cancer activities. Azasperpyranones are synthesized by 2 clusters, A and B. Cluster A is responsible for the production of the polyhydric phenol moiety while the azaphilonoid scaffold is produced by the cluster B. The non-reducing polyketide synthase ATEG_03629 produces 5-methyl orsellinic acid, which is then reduced to 5-methyl orsellinic aldehyde by the NRPS-like protein ATEG_03630. 5-methyl orsellinic aldehyde is then first hydroxylated by the FAD-dependent monooxygenase ATEG_03635 and subsequently hydroxylated by the cytochrome P450 monooxygenase ATEG_03631 to produce the unstable polyhydric phenol precursor of azasperpyranones. On the other hand, the polyketide synthase ATEG_07659 is responsible for producing the 3,5-dimethyloctadienone moiety from acetyl-CoA, three malonyl-CoA, and two S-adenosyl methionines (SAM). The 3,5-dimethyloctadienone moiety is then loaded onto the SAT domain of ATEG_07661 and extended with four malonyl-CoA and one SAM, which leads to the formation of 2,4-dihydroxy-6-(5,7-dimethyl-2-oxo-trans-3-trans-5-nonadienyl)-3-methylbenzaldehyde (compound 8) after reductive release and aldol condensation. The FAD-dependent monooxygenase ATEG_07662 is the next enzyme in the biosynthesis sequence and hydroxylates the side chain at the benzylic position of compound 8. In Aspergillus nidulans, afoF, the ortholog of the FAD-dependent oxygenase ATEG_07660, is the key enzyme for the biosynthesis of asperfuranone by catalyzing the hydroxylation at C-8 of to prevent the formation of a six-membered ring hemiacetal intermediate and thus facilitating the formation of a five-membered ring to produce asperfuranone. In Aspergillus terreus, ATEG_07660 is probably not functional, which leads to the formation of the six-membered ring hemiacetal intermediate presperpyranone instead of asperfuranone. Finally, ATEG_03636 is involved in the condensation of the polyhydric phenol moiety produced by cluster A and the perasperpyranone precursor produced by cluster B, to yield azasperpyranone A. Further modifications of azasperpyranone A result in the production of derivatives, including azasperpyranone B to F. The sequence is that of Probable esterase ATEG_07663 from Aspergillus terreus (strain NIH 2624 / FGSC A1156).